The sequence spans 360 residues: Hyaluronan and proteoglycan link protein 3 (360 aa).

The first 17 residues, 1–17, serve as a signal peptide directing secretion; it reads MGLLLLVPLLLLPGSYG. The region spanning 48–164 is the Ig-like V-type domain; the sequence is KLVVETPEET…ESGLVELELR (117 aa). Cystine bridges form between C70/C146, C188/C259, C212/C233, C286/C356, and C311/C332. Link domains lie at 166–261 and 266–358; these read VVFP…FCFA and GRVY…YCYR.

Belongs to the HAPLN family. Widely expressed with highest levels in spleen and placenta.

It localises to the secreted. It is found in the extracellular space. The protein resides in the extracellular matrix. In terms of biological role, may function in hyaluronic acid binding. The polypeptide is Hyaluronan and proteoglycan link protein 3 (HAPLN3) (Homo sapiens (Human)).